A 420-amino-acid chain; its full sequence is MSEKRVQPLARDAMAYVLAGGRGSRLKELTDRRAKPAVYFGGKARIIDFALSNALNSGIRRIGVATQYKAHSLIRHLQRGWDFFRPERNESFDILPASQRVSETQWYEGTADAVYQNIDIIEPYAPEYMVILAGDHIYKMDYEYMLQQHVDSGADVTIGCLEVPRMEATGFGVMHVNEKDEIIDFIEKPADPPGIPGNEGFALASMGIYVFHTKFLMEALRRDAADPTSSRDFGKDIIPYIVEHGKAVAHRFADSCVRSDFEHEPYWRDVGTIDAYWQANIDLTDVVPDLDIYDKSWPIWTYAEITPPAKFVHDDEDRRGSAVSSVVSGDCIISGAALNRSLLFTGVRANSYSRLENAVVLPSVKIGRHAQLSNVVIDHGVVIPEGLIVGEDPELDAKRFRRTESGICLITQSMIDKLDL.

Residues Y107, G172, 187–188 (EK), and S205 contribute to the alpha-D-glucose 1-phosphate site.

Belongs to the bacterial/plant glucose-1-phosphate adenylyltransferase family. In terms of assembly, homotetramer.

The catalysed reaction is alpha-D-glucose 1-phosphate + ATP + H(+) = ADP-alpha-D-glucose + diphosphate. Its pathway is glycan biosynthesis; glycogen biosynthesis. Involved in the biosynthesis of ADP-glucose, a building block required for the elongation reactions to produce glycogen. Catalyzes the reaction between ATP and alpha-D-glucose 1-phosphate (G1P) to produce pyrophosphate and ADP-Glc. This Agrobacterium fabrum (strain C58 / ATCC 33970) (Agrobacterium tumefaciens (strain C58)) protein is Glucose-1-phosphate adenylyltransferase.